A 91-amino-acid chain; its full sequence is ATP synthase subunit c (91 aa).

2 consecutive transmembrane segments (helical) span residues F4–I24 and I53–L73.

It belongs to the ATPase C chain family. In terms of assembly, F-type ATPases have 2 components, F(1) - the catalytic core - and F(0) - the membrane proton channel. F(1) has five subunits: alpha(3), beta(3), gamma(1), delta(1), epsilon(1). F(0) has three main subunits: a(1), b(2) and c(10-14). The alpha and beta chains form an alternating ring which encloses part of the gamma chain. F(1) is attached to F(0) by a central stalk formed by the gamma and epsilon chains, while a peripheral stalk is formed by the delta and b chains.

The protein resides in the cell inner membrane. In terms of biological role, f(1)F(0) ATP synthase produces ATP from ADP in the presence of a proton or sodium gradient. F-type ATPases consist of two structural domains, F(1) containing the extramembraneous catalytic core and F(0) containing the membrane proton channel, linked together by a central stalk and a peripheral stalk. During catalysis, ATP synthesis in the catalytic domain of F(1) is coupled via a rotary mechanism of the central stalk subunits to proton translocation. Its function is as follows. Key component of the F(0) channel; it plays a direct role in translocation across the membrane. A homomeric c-ring of between 10-14 subunits forms the central stalk rotor element with the F(1) delta and epsilon subunits. The chain is ATP synthase subunit c from Citrifermentans bemidjiense (strain ATCC BAA-1014 / DSM 16622 / JCM 12645 / Bem) (Geobacter bemidjiensis).